The primary structure comprises 118 residues: Fluoride-specific ion channel FluC 2 (118 aa).

4 consecutive transmembrane segments (helical) span residues 1–21 (MMEALLVATGGFFGAITRFAI), 33–53 (FPIATFLINITGAFLLGYIIG), 55–75 (GVTTGWQLLLGTGFMGAFTTF), and 93–113 (ILFLYLSATYIIGILFAFLGM). Residues G70 and T73 each coordinate Na(+).

The protein belongs to the fluoride channel Fluc/FEX (TC 1.A.43) family.

It localises to the cell membrane. It carries out the reaction fluoride(in) = fluoride(out). Na(+) is not transported, but it plays an essential structural role and its presence is essential for fluoride channel function. Its function is as follows. Fluoride-specific ion channel. Important for reducing fluoride concentration in the cell, thus reducing its toxicity. This chain is Fluoride-specific ion channel FluC 2, found in Bacillus cereus (strain ATCC 10987 / NRS 248).